Here is a 525-residue protein sequence, read N- to C-terminus: EGF domain-specific O-linked N-acetylglucosamine transferase (525 aa).

A signal peptide spans Met-1–Ala-24. The Required for optimal activity motif lies at Asp-293–Glu-295. N-linked (GlcNAc...) asparagine glycosylation occurs at Asn-352. The short motif at Arg-522–Leu-525 is the Prevents secretion from ER element.

The protein belongs to the glycosyltransferase 61 family.

The protein resides in the endoplasmic reticulum lumen. It carries out the reaction L-seryl-[protein] + UDP-N-acetyl-alpha-D-glucosamine = 3-O-(N-acetyl-beta-D-glucosaminyl)-L-seryl-[protein] + UDP + H(+). It catalyses the reaction L-threonyl-[protein] + UDP-N-acetyl-alpha-D-glucosamine = 3-O-(N-acetyl-beta-D-glucosaminyl)-L-threonyl-[protein] + UDP + H(+). Its function is as follows. Catalyzes the transfer of a single N-acetylglucosamine from UDP-GlcNAc to a serine or threonine residue in extracellular proteins resulting in their modification with a beta-linked N-acetylglucosamine (O-GlcNAc). Specifically glycosylates the Thr residue located between the fifth and sixth conserved cysteines of folded EGF-like domains. This is EGF domain-specific O-linked N-acetylglucosamine transferase (eogt) from Xenopus laevis (African clawed frog).